A 768-amino-acid polypeptide reads, in one-letter code: uncharacterized protein (768 aa).

The protein to E.coli YkiA.

This is an uncharacterized protein from Escherichia coli (strain K12).